Reading from the N-terminus, the 234-residue chain is Uridylate kinase (234 aa).

An ATP-binding site is contributed by 9-12; sequence KLSG. Glycine 51 lines the UMP pocket. 2 residues coordinate ATP: glycine 52 and arginine 56. UMP contacts are provided by residues aspartate 71 and 132–139; that span reads CGNPFFTT. Threonine 159, tyrosine 165, and aspartate 168 together coordinate ATP.

The protein belongs to the UMP kinase family. Homohexamer.

It localises to the cytoplasm. The enzyme catalyses UMP + ATP = UDP + ADP. It functions in the pathway pyrimidine metabolism; CTP biosynthesis via de novo pathway; UDP from UMP (UMPK route): step 1/1. Its activity is regulated as follows. Inhibited by UTP. Catalyzes the reversible phosphorylation of UMP to UDP. The protein is Uridylate kinase of Prochlorococcus marinus (strain AS9601).